Reading from the N-terminus, the 391-residue chain is Terminal nucleotidyltransferase 5C (391 aa).

This sequence belongs to the TENT family. As to quaternary structure, interacts with BCCIP and PABPC1; the interaction has no effect on TENT5C poly(A) polymerase function. Interacts with PLK4; this interaction leads to the TENT5C recruitment into the centrosome.

The protein resides in the nucleus. Its subcellular location is the cytoplasm. It localises to the cytoskeleton. The protein localises to the microtubule organizing center. It is found in the centrosome. It carries out the reaction RNA(n) + ATP = RNA(n)-3'-adenine ribonucleotide + diphosphate. In terms of biological role, catalyzes the transfer of one adenosine molecule from an ATP to an mRNA poly(A) tail bearing a 3'-OH terminal group and enhances mRNA stability and gene expression. Can also elongate RNA oligos ending with uridine molecule, provided that the sequence is adenosine-rich. Mainly targets mRNAs encoding endoplasmic reticulum-targeted protein. Functionally, (Microbial infection) Seems to enhance replication of some viruses, including yellow fever virus, in response to type I interferon. This is Terminal nucleotidyltransferase 5C from Homo sapiens (Human).